A 563-amino-acid chain; its full sequence is Sulfite reductase [NADPH] hemoprotein beta-component (563 aa).

The [4Fe-4S] cluster site is built by cysteine 427, cysteine 433, cysteine 472, and cysteine 476. Cysteine 476 lines the siroheme pocket.

The protein belongs to the nitrite and sulfite reductase 4Fe-4S domain family. As to quaternary structure, alpha(8)-beta(8). The alpha component is a flavoprotein, the beta component is a hemoprotein. Siroheme is required as a cofactor. It depends on [4Fe-4S] cluster as a cofactor.

The enzyme catalyses hydrogen sulfide + 3 NADP(+) + 3 H2O = sulfite + 3 NADPH + 4 H(+). The protein operates within sulfur metabolism; hydrogen sulfide biosynthesis; hydrogen sulfide from sulfite (NADPH route): step 1/1. Functionally, component of the sulfite reductase complex that catalyzes the 6-electron reduction of sulfite to sulfide. This is one of several activities required for the biosynthesis of L-cysteine from sulfate. The chain is Sulfite reductase [NADPH] hemoprotein beta-component from Shewanella frigidimarina (strain NCIMB 400).